The chain runs to 206 residues: Pro-glucagon (206 aa).

An N-terminal signal peptide occupies residues 1–22 (MKMKSIYFIAGLLLMIVQGSWQ). Positions 27 to 57 (DTEEKSRSFKASQSEPLDESRQLNEVKRHSQ) are disordered. The span at 44-54 (DESRQLNEVKR) shows a compositional bias: basic and acidic residues. A propeptide spanning residues 86-109 (NGQQGQEDKENDKFPDQLSSNAIS) is cleaved from the precursor. Arginine 147 carries the arginine amide modification. Propeptides lie at residues 151–163 (DFPE…EEMG) and 199–206 (RDLLGEYQ).

It belongs to the glucagon family. Proglucagon is post-translationally processed in a tissue-specific manner in pancreatic A cells and intestinal L cells. In pancreatic A cells, the major bioactive hormone is glucagon cleaved by PCSK2/PC2. In the intestinal L cells PCSK1/PC1 liberates GLP-1 and GLP-2. GLP-1 is further N-terminally truncated by post-translational processing in the intestinal L cells resulting in GLP-1(7-37) GLP-1-(7-36)amide.

It localises to the secreted. Its function is as follows. Plays a key role in glucose metabolism and homeostasis. Regulates blood glucose by increasing gluconeogenesis and decreasing glycolysis. Functionally, potent stimulator of glucose-dependent insulin release. Plays important roles on gastric motility and the suppression of plasma glucagon levels. May be involved in the suppression of satiety and stimulation of glucose disposal in peripheral tissues, independent of the actions of insulin. Has growth-promoting activities on intestinal epithelium. May also regulate the hypothalamic pituitary axis (HPA) via effects on LH, TSH, CRH, oxytocin, and vasopressin secretion. Increases islet mass through stimulation of islet neogenesis and pancreatic beta cell proliferation. Stimulates intestinal growth and up-regulates villus height in the small intestine, concomitant with increased crypt cell proliferation and decreased enterocyte apoptosis. The gastrointestinal tract, from the stomach to the colon is the principal target for GLP-2 action. Plays a key role in nutrient homeostasis, enhancing nutrient assimilation through enhanced gastrointestinal function, as well as increasing nutrient disposal. Stimulates intestinal glucose transport and decreases mucosal permeability. This chain is Pro-glucagon (GCG), found in Gallus gallus (Chicken).